Consider the following 364-residue polypeptide: Aminomethyltransferase (364 aa).

It belongs to the GcvT family. The glycine cleavage system is composed of four proteins: P, T, L and H.

It carries out the reaction N(6)-[(R)-S(8)-aminomethyldihydrolipoyl]-L-lysyl-[protein] + (6S)-5,6,7,8-tetrahydrofolate = N(6)-[(R)-dihydrolipoyl]-L-lysyl-[protein] + (6R)-5,10-methylene-5,6,7,8-tetrahydrofolate + NH4(+). Functionally, the glycine cleavage system catalyzes the degradation of glycine. This Thermotoga maritima (strain ATCC 43589 / DSM 3109 / JCM 10099 / NBRC 100826 / MSB8) protein is Aminomethyltransferase.